A 463-amino-acid polypeptide reads, in one-letter code: Vacuolar cation/proton exchanger 1 (463 aa).

Alanine 2 carries the post-translational modification N-acetylalanine. Residues 2–68 are Cytoplasmic-facing; the sequence is AGIVTEPWSV…LKDFLSNLQE (67 aa). The tract at residues 25 to 33 is required for autoinhibitory regulation; it reads SRELRLGRT. Residues 56–62 are required for interaction with autoinhibitory region; sequence YKGLKDF. The chain crosses the membrane as a helical span at residues 69-89; the sequence is VILGTKLAILFPAIPAAIICT. A required for Ca(2+)/H(+) exchange activity region spans residues 87 to 95; the sequence is ICTYCGVSQ. At 90–96 the chain is on the extracellular side; it reads YCGVSQP. A helical transmembrane segment spans residues 97-116; it reads WIFGLSLLGLTPLAERVSFL. At 117-127 the chain is on the cytoplasmic side; sequence TEQLAFYTGPT. The helical transmembrane segment at 128 to 148 threads the bilayer; the sequence is LGGLLNATCGNATELIIAILA. The segment at 137–172 is cation selection; sequence GNATELIIAILALTNNKVAVVKYSLLGSILSNLLLV. At 149 to 161 the chain is on the extracellular side; the sequence is LTNNKVAVVKYSL. The chain crosses the membrane as a helical span at residues 162–182; it reads LGSILSNLLLVLGTSLFCGGI. Over 183 to 197 the chain is Cytoplasmic; that stretch reads ANIRREQRFDRKQAD. The helical transmembrane segment at 198-218 threads the bilayer; the sequence is VNFFLLLLGFLCHLLPLLVGY. Residues 219 to 238 are Extracellular-facing; that stretch reads LKNGEASAAVLSDMQLSISR. Residues 239-259 traverse the membrane as a helical segment; sequence GFSIVMLISYIAYLVFQLWTH. Residues 260-281 lie on the Cytoplasmic side of the membrane; the sequence is RQLFDAQEQEDEYDDDVEQETA. Residues 282–302 traverse the membrane as a helical segment; the sequence is VISFWSGFAWLVGMTLVIALL. The Extracellular segment spans residues 303–325; sequence SEYVVATIEEASDKWNLSVSFIS. The N-linked (GlcNAc...) asparagine glycan is linked to asparagine 318. The chain crosses the membrane as a helical span at residues 326–346; it reads IILLPIVGNAAEHAGAVIFAF. The segment at 333 to 368 is cation selection; that stretch reads GNAAEHAGAVIFAFKNKLDISLGVALGSATQIGLFV. The Cytoplasmic segment spans residues 347–360; the sequence is KNKLDISLGVALGS. The helical transmembrane segment at 361-381 threads the bilayer; it reads ATQIGLFVVPLTIIVAWILGI. At 382-384 the chain is on the extracellular side; the sequence is NMD. A helical membrane pass occupies residues 385–405; that stretch reads LNFGPLETGCLAVSIIITAFT. The Cytoplasmic segment spans residues 406–411; sequence LQDGSS. Residues 412-432 traverse the membrane as a helical segment; it reads HYMKGLVLLLCYFIIAICFFV. Over 433 to 463 the chain is Extracellular; that stretch reads DKLPQKQNAIHLGHQAMNNVVTATGGGVFSS.

Belongs to the Ca(2+):cation antiporter (CaCA) (TC 2.A.19) family. Cation/proton exchanger (CAX) subfamily. In terms of assembly, interacts with GRXS14 and CXIP4. Expressed at low levels in leaves, stems and flowers.

It localises to the vacuole membrane. Activated by monothiol glutaredoxin GRXS14 and CXIP4. Inhibited by excess of Ca(2+) and Cd(2+), Na(+) and K(+), but not Mn(2+). In terms of biological role, vacuolar cation/proton exchanger (CAX). Translocates Ca(2+) and other metal ions into vacuoles using the proton gradient formed by H(+)-ATPase and H(+)-pyrophosphatase. Involved in ion homeostasis in association with CAX3. May play a role in cold-acclimation response. This Arabidopsis thaliana (Mouse-ear cress) protein is Vacuolar cation/proton exchanger 1 (CAX1).